A 357-amino-acid chain; its full sequence is Arginine kinase (357 aa).

Residue Ala-2 is modified to N-acetylalanine. Residues 9–91 form the Phosphagen kinase N-terminal domain; it reads KLEEGFKKLE…FDPIIEDYHK (83 aa). 64–68 serves as a coordination point for L-arginine; it reads GVGVY. One can recognise a Phosphagen kinase C-terminal domain in the interval 119-356; sequence FVISTRVRCG…LELIKIEKEM (238 aa). Residues 122 to 126 and His-185 contribute to the ATP site; that span reads STRVR. Residue Glu-225 participates in L-arginine binding. Arg-229 is an ATP binding site. Cys-271 contributes to the L-arginine binding site. ATP-binding positions include 280-284 and 309-314; these read RASVH and RGTRGE. Glu-314 serves as a coordination point for L-arginine.

This sequence belongs to the ATP:guanido phosphotransferase family.

It carries out the reaction L-arginine + ATP = N(omega)-phospho-L-arginine + ADP + H(+). In Carcinus maenas (Common shore crab), this protein is Arginine kinase.